The following is a 346-amino-acid chain: NADH-ubiquinone oxidoreductase chain 2 (346 aa).

The next 11 helical transmembrane spans lie at 3-23 (PLIF…VMMS), 25-45 (HWLM…PILM), 59-79 (YFLT…INLM), 96-116 (IIMT…FWVP), 122-142 (ISLT…MSIL), 149-169 (INLN…GWGG), 178-198 (IMAY…VYNP), 200-220 (LTML…MLFI), 242-262 (TLIL…GFMP), 274-294 (SSII…YFYM), and 322-342 (ITLL…TPML).

The protein belongs to the complex I subunit 2 family. As to quaternary structure, core subunit of respiratory chain NADH dehydrogenase (Complex I) which is composed of 45 different subunits. Interacts with TMEM242.

It localises to the mitochondrion inner membrane. It catalyses the reaction a ubiquinone + NADH + 5 H(+)(in) = a ubiquinol + NAD(+) + 4 H(+)(out). Functionally, core subunit of the mitochondrial membrane respiratory chain NADH dehydrogenase (Complex I) which catalyzes electron transfer from NADH through the respiratory chain, using ubiquinone as an electron acceptor. Essential for the catalytic activity and assembly of complex I. The protein is NADH-ubiquinone oxidoreductase chain 2 of Equus caballus (Horse).